The sequence spans 156 residues: MKVLIIFACLVVMASAVCNRLEQILVKTQWAQSYGEAENRAAFSRDLFSELFNIQGSSRALFSGVGVDDMNSAAFTAHCLRVTGALNRLISQLDQQATINADLAHLAGQHASRNLDASNFAAMGQAVMSVVPTHLDCFNQHAWGECYERIASGISG.

Residues 1–16 form the signal peptide; it reads MKVLIIFACLVVMASA. Positions 17–156 constitute a Globin domain; it reads VCNRLEQILV…YERIASGISG (140 aa). Cysteine 18 and cysteine 146 form a disulfide bridge. Hydrogen sulfide is bound at residue cysteine 79. A heme b-binding site is contributed by histidine 110.

The protein belongs to the globin family. The 400 kDa hemoglobin consists of a spherical 24-mer arranged as a double layer of dome-shaped dodecamers. Each dodecamer is composed of the 3-fold trimer of the tetramer A1-A2-B1-B2 having one intra-tetramer (A1-B2) disulfide bond and one inter-tetramer (B1-B2) disulfide bond per tetramer.

Its subcellular location is the secreted. In terms of biological role, the extracellular giant hemoglobin is able to bind and transport oxygen and hydrosulfide simultaneously and reversibly at two different sites. This Oligobrachia mashikoi (Beard worm) protein is Extracellular giant hemoglobin major globin subunit A1 (ghbA1).